Here is a 514-residue protein sequence, read N- to C-terminus: Extracellular exo-inulinase (514 aa).

Positions 1-18 (MRAFLALIFLTFVMNVES) are cleaved as a signal peptide. Substrate is bound by residues 33–34 (ND) and Gln52. Asp34 acts as the Nucleophile in catalysis. Residue Asn56 is glycosylated (N-linked (GlcNAc...) asparagine). Trp60 and Ser95 together coordinate substrate. Asn104 and Asn110 each carry an N-linked (GlcNAc...) asparagine glycan. Residue 162–163 (RD) participates in substrate binding. 2 N-linked (GlcNAc...) asparagine glycosylation sites follow: Asn197 and Asn203. Glu214 and Trp300 together coordinate substrate. The Proton donor/acceptor role is filled by Glu214. Residues Asn357, Asn371, Asn389, and Asn422 are each glycosylated (N-linked (GlcNAc...) asparagine).

The protein belongs to the glycosyl hydrolase 32 family.

It is found in the secreted. It catalyses the reaction Hydrolysis of terminal, non-reducing (2-&gt;1)- and (2-&gt;6)-linked beta-D-fructofuranose residues in fructans.. In terms of biological role, exo-inulinase involved in utilization of the plant storage polymer inulin, consisting of fructooligosaccharides with a degree of polymerization (DP) value from 2 to 60. Splits off terminal fructose units successively from the non-reducing end of the inulin molecule. In Meyerozyma guilliermondii (strain ATCC 6260 / CBS 566 / DSM 6381 / JCM 1539 / NBRC 10279 / NRRL Y-324) (Yeast), this protein is Extracellular exo-inulinase.